We begin with the raw amino-acid sequence, 131 residues long: Large ribosomal subunit protein bL17 (131 aa).

This sequence belongs to the bacterial ribosomal protein bL17 family. As to quaternary structure, part of the 50S ribosomal subunit. Contacts protein L32.

This Finegoldia magna (strain ATCC 29328 / DSM 20472 / WAL 2508) (Peptostreptococcus magnus) protein is Large ribosomal subunit protein bL17.